The primary structure comprises 224 residues: Octanoyltransferase (224 aa).

In terms of domain architecture, BPL/LPL catalytic spans 29–224 (EATPDALWIC…GQKLATYLAP (196 aa)). Residues 68-75 (RGGQVTFH), 157-159 (ALG), and 170-172 (GVA) each bind substrate. Catalysis depends on Cys-188, which acts as the Acyl-thioester intermediate.

Belongs to the LipB family.

The protein localises to the cytoplasm. It carries out the reaction octanoyl-[ACP] + L-lysyl-[protein] = N(6)-octanoyl-L-lysyl-[protein] + holo-[ACP] + H(+). The protein operates within protein modification; protein lipoylation via endogenous pathway; protein N(6)-(lipoyl)lysine from octanoyl-[acyl-carrier-protein]: step 1/2. In terms of biological role, catalyzes the transfer of endogenously produced octanoic acid from octanoyl-acyl-carrier-protein onto the lipoyl domains of lipoate-dependent enzymes. Lipoyl-ACP can also act as a substrate although octanoyl-ACP is likely to be the physiological substrate. The polypeptide is Octanoyltransferase (Polaromonas naphthalenivorans (strain CJ2)).